We begin with the raw amino-acid sequence, 370 residues long: Vasopressin V2 receptor (370 aa).

A disordered region spans residues 1–28; that stretch reads MLRATTSAVPRALSWPAAPGNGSEREPL. Topologically, residues 1–37 are extracellular; sequence MLRATTSAVPRALSWPAAPGNGSEREPLDDRDPLLAR. Asn-21 carries N-linked (GlcNAc...) asparagine glycosylation. Residues 38 to 62 traverse the membrane as a helical segment; sequence VELALLSTVFVAVALSNGLVLGALV. Topologically, residues 63–76 are cytoplasmic; it reads RRGRRGRWAPMHVF. A helical membrane pass occupies residues 77-97; that stretch reads IGHLCLADLAVALFQVLPQLA. Residues 98–112 lie on the Extracellular side of the membrane; the sequence is WDATYRFRGPDALCR. Residues 113-134 form a helical membrane-spanning segment; the sequence is AVKYLQMVGMYASSYMILAMTL. At 135-158 the chain is on the cytoplasmic side; sequence DRHRAICRPMLAYRHGGGARWNRP. The chain crosses the membrane as a helical span at residues 159–179; that stretch reads VLVAWAFSLLLSLPQLFIFAQ. At 180-199 the chain is on the extracellular side; that stretch reads RDVGDGSGVLDCWASFAEPW. A helical transmembrane segment spans residues 200–219; it reads GLRAYVTWIALMVFVAPALG. The Cytoplasmic portion of the chain corresponds to 220-270; the sequence is IAACQVLIFREIHTSLVPGPAERAGGHRGGRRAGSPREGARVSAAMAKTAR. Residues 271–292 form a helical membrane-spanning segment; it reads MTLVIVAVYVLCWAPFFLVQLW. Over 293-307 the chain is Extracellular; that stretch reads SVWDPKAPREGPPFV. The chain crosses the membrane as a helical span at residues 308–327; the sequence is LLMLLASLNSCTNPWIYASF. The Cytoplasmic portion of the chain corresponds to 328-370; it reads SSSISSELRSLLCCPRRRTPPSLRPQEESCATASSFSARDTSS. 2 S-palmitoyl cysteine lipidation sites follow: Cys-340 and Cys-341. The interval 347-370 is disordered; sequence PPSLRPQEESCATASSFSARDTSS. Polar residues predominate over residues 356 to 370; sequence SCATASSFSARDTSS.

The protein belongs to the G-protein coupled receptor 1 family. Vasopressin/oxytocin receptor subfamily. As to quaternary structure, interacts with ARRDC4. Identified in a complex containing at least ARRDC4, V2R and HGS. Interacts with TMEM147.

The protein resides in the cell membrane. Receptor for arginine vasopressin. The activity of this receptor is mediated by G proteins which activate adenylate cyclase. Involved in renal water reabsorption. The sequence is that of Vasopressin V2 receptor (AVPR2) from Sus scrofa (Pig).